We begin with the raw amino-acid sequence, 67 residues long: UPF0437 protein y4xE (67 aa).

It belongs to the UPF0437 family.

This is UPF0437 protein y4xE from Sinorhizobium fredii (strain NBRC 101917 / NGR234).